A 544-amino-acid polypeptide reads, in one-letter code: Probable protein kinase UbiB (544 aa).

Positions Glu123–Ser505 constitute a Protein kinase domain. ATP contacts are provided by residues Leu129–Val137 and Lys156. Asp291 (proton acceptor) is an active-site residue. A helical membrane pass occupies residues Leu522 to Leu540.

The protein belongs to the ABC1 family. UbiB subfamily.

It localises to the cell inner membrane. It participates in cofactor biosynthesis; ubiquinone biosynthesis [regulation]. In terms of biological role, is probably a protein kinase regulator of UbiI activity which is involved in aerobic coenzyme Q (ubiquinone) biosynthesis. This chain is Probable protein kinase UbiB, found in Actinobacillus pleuropneumoniae serotype 5b (strain L20).